Here is a 540-residue protein sequence, read N- to C-terminus: UDP-N-acetylmuramyl-tripeptide synthetase (540 aa).

Position 33 (Ser33) interacts with UDP-N-acetyl-alpha-D-muramoyl-L-alanyl-D-glutamate. 114 to 120 (GTEGKSS) contributes to the ATP binding site. Residues 158 to 159 (TT), Ser185, and Arg195 contribute to the UDP-N-acetyl-alpha-D-muramoyl-L-alanyl-D-glutamate site. An N6-carboxylysine modification is found at Lys227.

The protein belongs to the MurCDEF family. MurE subfamily. Post-translationally, carboxylation is probably crucial for Mg(2+) binding and, consequently, for the gamma-phosphate positioning of ATP.

It is found in the cytoplasm. It functions in the pathway cell wall biogenesis; peptidoglycan biosynthesis. Its function is as follows. Catalyzes the addition of an amino acid to the nucleotide precursor UDP-N-acetylmuramoyl-L-alanyl-D-glutamate (UMAG) in the biosynthesis of bacterial cell-wall peptidoglycan. This Treponema pallidum (strain Nichols) protein is UDP-N-acetylmuramyl-tripeptide synthetase.